The following is a 293-amino-acid chain: Bifunctional protein FolD (293 aa).

NADP(+)-binding positions include 164–166 (GRS), serine 193, and threonine 234.

It belongs to the tetrahydrofolate dehydrogenase/cyclohydrolase family. As to quaternary structure, homodimer.

It carries out the reaction (6R)-5,10-methylene-5,6,7,8-tetrahydrofolate + NADP(+) = (6R)-5,10-methenyltetrahydrofolate + NADPH. The catalysed reaction is (6R)-5,10-methenyltetrahydrofolate + H2O = (6R)-10-formyltetrahydrofolate + H(+). Its pathway is one-carbon metabolism; tetrahydrofolate interconversion. Functionally, catalyzes the oxidation of 5,10-methylenetetrahydrofolate to 5,10-methenyltetrahydrofolate and then the hydrolysis of 5,10-methenyltetrahydrofolate to 10-formyltetrahydrofolate. This is Bifunctional protein FolD from Azobacteroides pseudotrichonymphae genomovar. CFP2.